The sequence spans 712 residues: DNA ligase (712 aa).

NAD(+) contacts are provided by residues 53 to 57 (DAEFD), 103 to 104 (SL), and E133. K135 acts as the N6-AMP-lysine intermediate in catalysis. 4 residues coordinate NAD(+): R156, E196, K315, and K339. Positions 433, 436, 452, and 458 each coordinate Zn(2+). The region spanning 622-711 (SIERTLEGLS…PERDAEDGEP (90 aa)) is the BRCT domain.

Belongs to the NAD-dependent DNA ligase family. LigA subfamily. It depends on Mg(2+) as a cofactor. The cofactor is Mn(2+).

It carries out the reaction NAD(+) + (deoxyribonucleotide)n-3'-hydroxyl + 5'-phospho-(deoxyribonucleotide)m = (deoxyribonucleotide)n+m + AMP + beta-nicotinamide D-nucleotide.. Its function is as follows. DNA ligase that catalyzes the formation of phosphodiester linkages between 5'-phosphoryl and 3'-hydroxyl groups in double-stranded DNA using NAD as a coenzyme and as the energy source for the reaction. It is essential for DNA replication and repair of damaged DNA. This chain is DNA ligase, found in Mycolicibacterium gilvum (strain PYR-GCK) (Mycobacterium gilvum (strain PYR-GCK)).